Consider the following 128-residue polypeptide: Flagellar hook-basal body complex protein FliE (128 aa).

Residues 1–60 (MRPVASFRPPPTFSALQGGASSQATKTAGIDQRGTNQAFSLLDPQSTQSNSTDSSFGEMG) form a disordered region. Residues 33-55 (RGTNQAFSLLDPQSTQSNSTDSS) are compositionally biased toward polar residues.

This sequence belongs to the FliE family.

It localises to the bacterial flagellum basal body. This is Flagellar hook-basal body complex protein FliE from Rhodopirellula baltica (strain DSM 10527 / NCIMB 13988 / SH1).